We begin with the raw amino-acid sequence, 101 residues long: Small ribosomal subunit protein uS14 (101 aa).

This sequence belongs to the universal ribosomal protein uS14 family. As to quaternary structure, part of the 30S ribosomal subunit. Contacts proteins S3 and S10.

Binds 16S rRNA, required for the assembly of 30S particles and may also be responsible for determining the conformation of the 16S rRNA at the A site. The sequence is that of Small ribosomal subunit protein uS14 from Rhizobium meliloti (strain 1021) (Ensifer meliloti).